The following is a 2771-amino-acid chain: Teneurin-4 (2771 aa).

Residues 1 to 22 are compositionally biased toward basic and acidic residues; that stretch reads MDVKERKPYRSLTRRRDAERRY. Residues 1–45 are disordered; sequence MDVKERKPYRSLTRRRDAERRYTSSSADSEEGKGPQKSYSSSETL. The Teneurin N-terminal domain maps to 1–341; sequence MDVKERKPYR…KPSKYCNWKC (341 aa). The Cytoplasmic portion of the chain corresponds to 1–345; sequence MDVKERKPYR…YCNWKCAALS (345 aa). A Phosphoserine modification is found at serine 124. Residues 132 to 233 are disordered; sequence WGRSTRSGRS…PPAGSAQEPT (102 aa). Over residues 134-155 the composition is skewed to low complexity; that stretch reads RSTRSGRSSCLSSRANSNLTLT. Basic and acidic residues predominate over residues 156–166; sequence DTEHENTETDH. Threonine 178 carries the post-translational modification Phosphothreonine. Over residues 191 to 211 the composition is skewed to polar residues; the sequence is QHHAASINSLNRGNFTPRSNP. A helical transmembrane segment spans residues 346–366; it reads AILISATLVILLAYFVAMHLF. Over 367-2771 the chain is Extracellular; the sequence is GLNWHLQPME…FMRQSEMGRR (2405 aa). The interval 403–428 is disordered; the sequence is SGGTGLETPDRKGKGAAEGKPSSLFP. Residues 410–419 show a composition bias toward basic and acidic residues; the sequence is TPDRKGKGAA. N-linked (GlcNAc...) asparagine glycosylation is present at asparagine 469. Residues 509-528 form a disordered region; it reads ARSLEGPQRQSRGPVPPSSH. EGF-like domains are found at residues 564-595, 596-626, 628-660, 661-692, 694-727, 728-759, 760-789, and 790-833; these read SVDN…PDCG, RASC…AECD, PTNQ…ESCE, EVDC…TNCE, PRAT…HDCS, IEIC…ACDQ, RACH…EHCT, and IAHY…TGCD. Disulfide bonds link cysteine 568–cysteine 578, cysteine 572–cysteine 583, cysteine 585–cysteine 594, cysteine 603–cysteine 614, cysteine 616–cysteine 625, cysteine 632–cysteine 643, cysteine 637–cysteine 648, cysteine 650–cysteine 659, cysteine 664–cysteine 675, cysteine 669–cysteine 680, cysteine 682–cysteine 691, cysteine 702–cysteine 715, cysteine 717–cysteine 726, cysteine 731–cysteine 741, cysteine 735–cysteine 746, cysteine 748–cysteine 757, cysteine 762–cysteine 772, cysteine 766–cysteine 777, cysteine 779–cysteine 788, cysteine 802–cysteine 812, cysteine 806–cysteine 821, and cysteine 823–cysteine 832. N-linked (GlcNAc...) asparagine glycans are attached at residues asparagine 942 and asparagine 1261. 5 NHL repeats span residues 1218-1261, 1266-1310, 1336-1380, 1395-1446, and 1525-1568; these read SCPS…PSGN, LEMR…VKST, TRCG…NGII, LSCD…VAGR, and CFSG…IRKN. The stretch at 1578–1597 is one YD 1 repeat; sequence YELSSPIDQELYLFDTSGKH. An N-linked (GlcNAc...) asparagine glycan is attached at asparagine 1611. 3 YD repeats span residues 1614 to 1634, 1677 to 1696, and 1697 to 1719; these read YTGD…VNVR, YHGN…WTTF, and YEYD…SSFR. N-linked (GlcNAc...) asparagine glycosylation is found at asparagine 1707, asparagine 1743, asparagine 1801, and asparagine 1886. YD repeat units follow at residues 1889 to 1908, 1930 to 1948, 1949 to 1969, 1976 to 1993, 1994 to 2015, 2016 to 2033, 2036 to 2056, 2059 to 2079, 2087 to 2106, 2112 to 2129, 2130 to 2156, 2158 to 2171, 2172 to 2195, 2198 to 2218, 2219 to 2239, 2241 to 2261, 2273 to 2293, and 2295 to 2315; these read YSPG…ERME, YLEK…YIFE, FDKN…QTLE, YYRN…VIQD, FTED…VIYK, YGKL…TKVS, YDET…FTCT, YRQI…EGMV, YDNS…TPLP, YDDV…GVIY, YDIN…MKEV, YEIF…MTVQ, YDNM…TRYS, YDAD…WRYS, YDLN…LTPL, YDLR…DEDG, YNSA…SVRY, and YDGL…LQFF. An N-linked (GlcNAc...) asparagine glycan is attached at asparagine 1987. Residue asparagine 2190 is glycosylated (N-linked (GlcNAc...) asparagine). A glycan (N-linked (GlcNAc...) asparagine) is linked at asparagine 2330. The stretch at 2341–2382 is one YD 23 repeat; sequence YDLQGHLFAMELSSGDEFYIACDNIGTPLAVFSGTGLMIKQI. Asparagine 2648 carries N-linked (GlcNAc...) asparagine glycosylation.

The protein belongs to the tenascin family. Teneurin subfamily. Homodimer; disulfide-linked. May also form heterodimer with either TENM1 or TENM2 or TENM3. In terms of tissue distribution, expressed in brain and spinal cord (at protein level). Expressed in neurons and oligodendrocytes of the spinal cord. Expressed weakly in kidney, lung and spleen. Expressed in the cortex, CA1, CA2 and CA3 of the hippocampus. Expressed in the white matter, Purkinje cells and molecular layer of the cerebellum.

Its subcellular location is the cell membrane. The protein localises to the cell projection. It is found in the nucleus. It localises to the cytoplasm. Functionally, involved in neural development, regulating the establishment of proper connectivity within the nervous system. Plays a role in the establishment of the anterior-posterior axis during gastrulation. Regulates the differentiation and cellular process formation of oligodendrocytes and myelination of small-diameter axons in the central nervous system (CNS). Promotes activation of focal adhesion kinase. May function as a cellular signal transducer. This is Teneurin-4 (Tenm4) from Mus musculus (Mouse).